The chain runs to 404 residues: Deoxyguanosinetriphosphate triphosphohydrolase-like protein (404 aa).

Residues 1 to 33 (MSVGMAAPRAAYGCDPDRSRGRQFAEPPSNNRS) are disordered. The 149-residue stretch at 69 to 217 (RLTHSLEVAQ…AAIADDIAYD (149 aa)) folds into the HD domain.

It belongs to the dGTPase family. Type 2 subfamily.

This chain is Deoxyguanosinetriphosphate triphosphohydrolase-like protein, found in Rhodopseudomonas palustris (strain BisB5).